A 572-amino-acid chain; its full sequence is Probable pyruvate decarboxylase C186.09 (572 aa).

Residues aspartate 38 and histidine 125 each coordinate substrate. Residues 400 to 482 (DSWFGGMRIT…FLINNRGYTI (83 aa)) are thiamine pyrophosphate binding. Positions 450, 477, and 479 each coordinate Mg(2+). Glutamate 483 is a substrate binding site.

This sequence belongs to the TPP enzyme family. Homotetramer. A metal cation serves as cofactor. The cofactor is thiamine diphosphate.

It carries out the reaction a 2-oxocarboxylate + H(+) = an aldehyde + CO2. This chain is Probable pyruvate decarboxylase C186.09, found in Schizosaccharomyces pombe (strain 972 / ATCC 24843) (Fission yeast).